A 501-amino-acid chain; its full sequence is CaM kinase-like vesicle-associated protein (501 aa).

The 263-residue stretch at 24–286 (YDLGQVIKTE…AEEAISHEWI (263 aa)) folds into the Protein kinase domain. Residues 327–501 (RAPEQSSTAA…AQESQREEAS (175 aa)) form a disordered region. Over residues 331–365 (QSSTAAAQSASATDTATPGAAGGATAAAASGATSA) the composition is skewed to low complexity. Residues 387–428 (TPATDGSATPATDGSVTPATDGSITPATDGSVTPATDRSATP) show a composition bias toward polar residues. Thr-435 bears the Phosphothreonine mark. Residues 438-451 (TEESTVPTTQSSAM) are compositionally biased toward polar residues. Residue Thr-459 is modified to Phosphothreonine.

It belongs to the protein kinase superfamily. CAMK Ser/Thr protein kinase family. As to quaternary structure, interacts with calmodulin, in the presence of calcium. Ca(2+) serves as cofactor.

The protein resides in the cell membrane. The protein localises to the cytoplasmic vesicle membrane. In terms of biological role, does not appear to have detectable kinase activity. In Homo sapiens (Human), this protein is CaM kinase-like vesicle-associated protein (CAMKV).